The primary structure comprises 266 residues: NAD-capped RNA hydrolase NudC (266 aa).

Residue Arg74 coordinates substrate. Positions 103, 106, 121, and 124 each coordinate Zn(2+). Tyr129 lines the substrate pocket. In terms of domain architecture, Nudix hydrolase spans 130-253 (PRVSPCIIVA…TIARVLIDET (124 aa)). 3 residues coordinate a divalent metal cation: Ala163, Glu179, and Glu183. Residues 164 to 185 (GFVEAGETLEQCVAREVEEETG) carry the Nudix box motif. 197 to 204 (QPWAFPSN) provides a ligand contact to substrate. Glu224 is a binding site for a divalent metal cation. Ala246 is a binding site for substrate.

Belongs to the Nudix hydrolase family. NudC subfamily. Homodimer. Mg(2+) serves as cofactor. Mn(2+) is required as a cofactor. The cofactor is Zn(2+).

It catalyses the reaction a 5'-end NAD(+)-phospho-ribonucleoside in mRNA + H2O = a 5'-end phospho-adenosine-phospho-ribonucleoside in mRNA + beta-nicotinamide D-ribonucleotide + 2 H(+). It carries out the reaction NAD(+) + H2O = beta-nicotinamide D-ribonucleotide + AMP + 2 H(+). The enzyme catalyses NADH + H2O = reduced beta-nicotinamide D-ribonucleotide + AMP + 2 H(+). Functionally, mRNA decapping enzyme that specifically removes the nicotinamide adenine dinucleotide (NAD) cap from a subset of mRNAs by hydrolyzing the diphosphate linkage to produce nicotinamide mononucleotide (NMN) and 5' monophosphate mRNA. The NAD-cap is present at the 5'-end of some mRNAs and stabilizes RNA against 5'-processing. Has preference for mRNAs with a 5'-end purine. Catalyzes the hydrolysis of a broad range of dinucleotide pyrophosphates. This chain is NAD-capped RNA hydrolase NudC, found in Photobacterium profundum (strain SS9).